Here is a 276-residue protein sequence, read N- to C-terminus: Cell division protein FtsQ (276 aa).

The Cytoplasmic portion of the chain corresponds to 1–11 (MQYILKLKYYL). The chain crosses the membrane as a helical span at residues 12-32 (YNITWKLVFICVMLVLLIVGI). The Periplasmic portion of the chain corresponds to 33 to 276 (HKNIKWVCDY…NVSKGSHDYD (244 aa)). In terms of domain architecture, POTRA spans 45 to 115 (GPLSYIIVTG…NTLKINLIEY (71 aa)).

This sequence belongs to the FtsQ/DivIB family. FtsQ subfamily. In terms of assembly, part of a complex composed of FtsB, FtsL and FtsQ.

The protein localises to the cell inner membrane. Essential cell division protein. May link together the upstream cell division proteins, which are predominantly cytoplasmic, with the downstream cell division proteins, which are predominantly periplasmic. May control correct divisome assembly. This Blochmanniella floridana protein is Cell division protein FtsQ.